The chain runs to 1843 residues: MAHNEVSAAWHPALRSEDGVPSNAPVSDDLTQVSKDSMTESAAELKPSEAVIQENDLHSSSTSPDTDASVNVQSTAVPAVLDSDTPVYAEQVLNQENAQKNTAENSAQEDAPDHGQELSQTISDEPHVIETSEESAPTLGAAFGSDANGSHDTAAPDYMMDEPSPAEHDTTERREDNDAASWFNEQVDSGDRQTTNEFVNDDNQDFWGSPTNGDAGDDFFNQLKTQTKPIYIPPETESRYEEGVPLLDNTVESPVQPSMKEESQIDKIFEDDGDDEGGAFFNEVQGSVPNEGVPSPPITRKSTTQVIGSLDASPDSPVSPASSTAQEFNNILAAAASENQVKEDLSDDDLAAKWQAELSDDQPEKSTEDDLAARWQAALDDDDDLLLEDEIGKGPNNGQESLPQNPNGSVHETTQATLSSPFGTPQSSARPQAQPTSYTPHQPSTSDLLQGIPGIAPQSSAAPMQDYFAPPAQPRPTTKRAESFAERSKEGYKSPYDLPDDLTRPRKPVVTHKPVVAQPGSMPPPPRSSSIPVPPTNAPGVPTPPPAPSTVPAVTTPKNFYEELPLPPPRPRSRPASSGRYTPTANIVTSPPSHSQPPPPPPANPYASLSPPPQDSGSVGSQTQLQQPERLDPYANLLGPGAPGAPAAPSAASRYSPKPPTLQPGTKPPSAPRYSPAPPQSAAPAPPRTRYASQPSSVSSQGAVLPFQPRTSSPLAHHEKVSYQPPEGLAIRSAPESASSYAPNGMQPRPNQQDVSNSITAPVGAAGSAAVTAVPENVSAAIQPTSPPRNPYAPPAYINEFSKRVAPMASPPPAVVPPTGDAQFVPPRRSQTQSPSQQASAPGLSVPSDSLQRPASVHAPASPTKSANPYAPSQISIHNRVPSQPLEFIPPNDGQELDPLERWKGAPIVKFGFGGSITSCFPKHVPRYAAGQAAPKIKSTPGEVKIFSANDWVPITEGIVQHPGPLKNKSKKKDLVAWLSSKIAAFENEGISEAAQLHPESSKRHDEKILLWKIVRALVEHDGVLEGSAEVEKSLRYIIFPHLQNSEPESTSGVNLPAFNALPPLNAPSQSDATDSQSLESIRNSLLVGNREKAVWDAVDNRLWGHAMVIASTLDRSVWKQVVQEFVRREVKSTTGNSESLAALYEIFAGNVDESVDELVPPSARAGFQMVSKVGGQGPSKNALEGLDSWRDTLGLVLSNRSPEDHKALLALGRLLLSYGRTEAAHICFMFSRAAVFGGADDPQTSIVLLGADHQHLPLNVLQDDDAILLTEAYEYAVSVLAGSPTSTLPHLLAFKLIHACSLAEHGRKSEALQYVDAITAALNATTKPSGYHNQHLLFGVDELSARLRQTTSDSGSSWISRPSMEKVSGSMWAKFNSFVAGEDSDAASTGSGKAGDGDIGPFAKFSGTPTVSRSPSVSDFGPYSLPAAQSVPGSGPSRYQPGNQYVPNSSPEQYRGRSSLDSQRSSSFGFPFGQRRGSQEPSTPVESSMYQGGPLYGSPSAAGYQSTPPQASYMPLAPVVEDSAPQPYPVEPAPMQGSPVNISPYQPPANESFGEPLDQSSATVPASSMAGYVPPGAGGGYEPPSVEISAAPALDTTEEPTHQDVLKKKKSFMDDDDDDDLAARAAAIQKAEKARKDREADEAFRKAAEADAKRPPAAKKSWFGGWFGGAKKENDNNNNSGGPIRAKLGEENSFYYDKELKKWVNKKDPNSASVSRGTPPPPKASAPSRSASGSTAPPAASMGLGLDSRPPSSAGAPPSLSSSPAPPSLAAPPPMLGTARSASTSAAMPTPPIGSSLPPPPRPATSLSNASSIDDLLGAPQARKGTSAKGRKKGRYVDVMAK.

6 disordered regions span residues M1–F220, F269–T324, N339–A769, P807–P872, S1385–E1691, and N1706–K1843. Composition is skewed to polar residues over residues D29–E40, H58–A76, and V92–Q108. Residues P165 to N177 are compositionally biased toward basic and acidic residues. Residues F183–F198 are compositionally biased toward polar residues. The segment covering S309–S323 has biased composition (low complexity). Over residues Q362 to A372 the composition is skewed to basic and acidic residues. A compositionally biased stretch (acidic residues) spans L379–D389. Residues N396–L448 are compositionally biased toward polar residues. The span at K479 to Y492 shows a compositional bias: basic and acidic residues. Positions S521 to S549 are enriched in pro residues. Polar residues predominate over residues G579 to T589. Over residues H594 to Q614 the composition is skewed to pro residues. The segment covering D615–Q627 has biased composition (polar residues). The span at G644–S656 shows a compositional bias: low complexity. Over residues P657–P687 the composition is skewed to pro residues. 2 stretches are compositionally biased toward polar residues: residues Y691 to G702 and R749 to I759. 2 stretches are compositionally biased toward low complexity: residues T760–A769 and P826–P842. Composition is skewed to polar residues over residues P863 to P872, G1408 to V1418, and Q1441 to E1453. The span at G1457–S1468 shows a compositional bias: low complexity. Polar residues predominate over residues Q1480–Y1491. The segment covering K1631–R1655 has biased composition (basic and acidic residues). 2 stretches are compositionally biased toward low complexity: residues S1726 to S1742 and P1751 to S1764. Composition is skewed to pro residues over residues P1765–M1776 and P1790–P1804.

This sequence belongs to the SEC16 family.

It is found in the endoplasmic reticulum membrane. Involved in the initiation of assembly of the COPII coat required for the formation of transport vesicles from the endoplasmic reticulum (ER) and the selection of cargo molecules. Also involved in autophagy. The polypeptide is COPII coat assembly protein sec16 (sec16) (Aspergillus oryzae (strain ATCC 42149 / RIB 40) (Yellow koji mold)).